The primary structure comprises 660 residues: Methionine--tRNA ligase 1 (660 aa).

Residues 15-25 carry the 'HIGH' region motif; sequence YYPSGKLHIGH. Positions 310–314 match the 'KMSKS' region motif; sequence KMSKS. ATP is bound at residue K313. A tRNA-binding domain is found at 560-660; sequence DFFKVELRVA…QNIPNGTKIK (101 aa).

This sequence belongs to the class-I aminoacyl-tRNA synthetase family. MetG type 2B subfamily. As to quaternary structure, homodimer.

It is found in the cytoplasm. It carries out the reaction tRNA(Met) + L-methionine + ATP = L-methionyl-tRNA(Met) + AMP + diphosphate. Its function is as follows. Is required not only for elongation of protein synthesis but also for the initiation of all mRNA translation through initiator tRNA(fMet) aminoacylation. The polypeptide is Methionine--tRNA ligase 1 (Bacillus anthracis).